The sequence spans 476 residues: Bifunctional protein HldE (476 aa).

A ribokinase region spans residues 1–318 (MKLDLTVLEQ…YTALHGDKLA (318 aa)). ATP is bound at residue 195–198 (NLGE). Residue D264 is part of the active site. Residues 344 to 476 (MTNGCFDILH…MIDTILDREG (133 aa)) are cytidylyltransferase.

It in the N-terminal section; belongs to the carbohydrate kinase PfkB family. The protein in the C-terminal section; belongs to the cytidylyltransferase family. In terms of assembly, homodimer.

It catalyses the reaction D-glycero-beta-D-manno-heptose 7-phosphate + ATP = D-glycero-beta-D-manno-heptose 1,7-bisphosphate + ADP + H(+). The enzyme catalyses D-glycero-beta-D-manno-heptose 1-phosphate + ATP + H(+) = ADP-D-glycero-beta-D-manno-heptose + diphosphate. It functions in the pathway nucleotide-sugar biosynthesis; ADP-L-glycero-beta-D-manno-heptose biosynthesis; ADP-L-glycero-beta-D-manno-heptose from D-glycero-beta-D-manno-heptose 7-phosphate: step 1/4. It participates in nucleotide-sugar biosynthesis; ADP-L-glycero-beta-D-manno-heptose biosynthesis; ADP-L-glycero-beta-D-manno-heptose from D-glycero-beta-D-manno-heptose 7-phosphate: step 3/4. Catalyzes the phosphorylation of D-glycero-D-manno-heptose 7-phosphate at the C-1 position to selectively form D-glycero-beta-D-manno-heptose-1,7-bisphosphate. Functionally, catalyzes the ADP transfer from ATP to D-glycero-beta-D-manno-heptose 1-phosphate, yielding ADP-D-glycero-beta-D-manno-heptose. The sequence is that of Bifunctional protein HldE from Chromohalobacter salexigens (strain ATCC BAA-138 / DSM 3043 / CIP 106854 / NCIMB 13768 / 1H11).